A 331-amino-acid polypeptide reads, in one-letter code: Peroxisomal nicotinamide adenine dinucleotide carrier (331 aa).

Solcar repeat units lie at residues 2 to 91, 109 to 216, and 229 to 320; these read SDAL…FRNR, VGMF…MLTK, and VTAL…LVKG. Transmembrane regions (helical) follow at residues 5-25, 63-85, 116-136, 180-200, 235-255, and 293-313; these read LING…TYPL, LYGG…YYFY, LVAA…WVIV, VYDE…LIMV, FLLG…LLVV, and YKGM…LFMI.

Belongs to the mitochondrial carrier (TC 2.A.29) family. Homodimer. Expressed in cotyledons, hypocotyls, vascular tissues, trichomes, hydathodes, seeds, pedicels, flowers and stigma.

Its subcellular location is the glyoxysome membrane. With respect to regulation, inhibited by pyridoxal 5'-phosphate, bathophenanthroline, tannic acid, mersalyl, mercuric chloride and bromocresol purple. In terms of biological role, mediates the NAD(+) import into peroxisomes. Favors the NAD(+)(in)/AMP(out) antiport exchange, but is also able to catalyze a low unidirectional transport that might be essential under special conditions. Transports CoA, dephospho-CoA, acetyl-CoA, adenosine 3',5'-diphosphate (PAP), NAD(+), AMP, ADP and NADH, but has no activity with ATP, GTP, GDP, NADPH, NADP(+) or FAD. Required for peroxisomes proliferation. The protein is Peroxisomal nicotinamide adenine dinucleotide carrier (PXN) of Arabidopsis thaliana (Mouse-ear cress).